Consider the following 649-residue polypeptide: Acetyl-coenzyme A synthetase (649 aa).

CoA-binding positions include 189–192 (RGGK), threonine 311, and asparagine 335. Residues 387 to 389 (GEP), 411 to 416 (DTWWQT), aspartate 500, and arginine 515 each bind ATP. Residue serine 523 coordinates CoA. Arginine 526 contributes to the ATP binding site. Residues valine 537, histidine 539, and valine 542 each coordinate Mg(2+). A CoA-binding site is contributed by arginine 584. Position 609 is an N6-acetyllysine (lysine 609).

Belongs to the ATP-dependent AMP-binding enzyme family. Mg(2+) serves as cofactor. Post-translationally, acetylated. Deacetylation by the SIR2-homolog deacetylase activates the enzyme.

It catalyses the reaction acetate + ATP + CoA = acetyl-CoA + AMP + diphosphate. In terms of biological role, catalyzes the conversion of acetate into acetyl-CoA (AcCoA), an essential intermediate at the junction of anabolic and catabolic pathways. AcsA undergoes a two-step reaction. In the first half reaction, AcsA combines acetate with ATP to form acetyl-adenylate (AcAMP) intermediate. In the second half reaction, it can then transfer the acetyl group from AcAMP to the sulfhydryl group of CoA, forming the product AcCoA. In Rhizobium meliloti (strain 1021) (Ensifer meliloti), this protein is Acetyl-coenzyme A synthetase.